A 1165-amino-acid polypeptide reads, in one-letter code: Chitin synthase 3 (1165 aa).

The Cytoplasmic segment spans residues 1-170 (MTGLNGDDPD…ETNDTLSFWQ (170 aa)). Disordered regions lie at residues 19–53 (DEES…NNPD) and 74–97 (PSST…GSVR). Over residues 74–92 (PSSTGVNPNATRRSGSLRS) the composition is skewed to polar residues. K136 is covalently cross-linked (Glycyl lysine isopeptide (Lys-Gly) (interchain with G-Cter in ubiquitin)). A helical membrane pass occupies residues 171–191 (MYCYFITFWAPAPILAFCGMP). At 192–340 (KKERQMAWRE…PNFTVENYAG (149 aa)) the chain is on the extracellular side. N-linked (GlcNAc...) asparagine glycans are attached at residues N303 and N332. Residues 341–354 (WNCHTSKEDRDAFY) form a helical membrane-spanning segment. The Cytoplasmic segment spans residues 355-452 (GLKSKADVYF…SKTVGCIASD (98 aa)). Residues 453–473 (VVLYVSLVFILSVVIIKFIIA) form a helical membrane-spanning segment. At 474–891 (CYFRWTVARK…EYYISHHQAK (418 aa)) the chain is on the extracellular side. The residue at position 537 (S537) is a Phosphoserine. T538 carries the phosphothreonine modification. The chain crosses the membrane as a helical span at residues 892–910 (AFESVFGSVTCLPGCFSMY). Residues 911–1029 (RIKSPKGSDG…SMQFVIGIEL (119 aa)) lie on the Cytoplasmic side of the membrane. The chain crosses the membrane as a helical span at residues 1030–1050 (IGTMVLPLAICFTIYVIIFAI). The Extracellular portion of the chain corresponds to 1051 to 1055 (VSKPT). The chain crosses the membrane as a helical span at residues 1056–1076 (PVITLVLLAIILGLPGLIVVI). Residues 1077–1165 (TATRWSYLWW…RKEESDSFVA (89 aa)) are Cytoplasmic-facing.

The protein belongs to the chitin synthase family. Class IV subfamily. In terms of assembly, homodimer. May form higher order oligomers. Seems to interact with BNI4 and SKT5 which link CHS3 to septins. In terms of processing, glycosylated. Post-translationally, palmitoylated by PFA4; required for proper export from the ER.

It is found in the cell membrane. The protein resides in the bud neck. It localises to the cytoplasmic vesicle membrane. The enzyme catalyses [(1-&gt;4)-N-acetyl-beta-D-glucosaminyl](n) + UDP-N-acetyl-alpha-D-glucosamine = [(1-&gt;4)-N-acetyl-beta-D-glucosaminyl](n+1) + UDP + H(+). Functionally, polymerizes chitin, a structural polymer of the cell wall and septum, by transferring the sugar moiety of UDP-GlcNAc to the non-reducing end of the growing chitin polymer. Appears to be responsible for synthesis of the majority of the chitin found in the cell wall periphery. It is involved in the synthesis of the chitin ring that forms in the cell wall just before bud emergence. This ring remains at the base of the bud as the bud grows and ultimately forms part of the bud scar marking the division site on the mother cell. Also catalyzes the synthesis of chitin laid down during mating and spore cell-wall synthesis. The sequence is that of Chitin synthase 3 from Saccharomyces cerevisiae (strain ATCC 204508 / S288c) (Baker's yeast).